The sequence spans 289 residues: Nucleotide-binding protein LAF_0356 (289 aa).

Residue 12-19 (GMSGAGKT) participates in ATP binding. Residue 62–65 (DSRS) coordinates GTP.

Belongs to the RapZ-like family.

Displays ATPase and GTPase activities. The sequence is that of Nucleotide-binding protein LAF_0356 from Limosilactobacillus fermentum (strain NBRC 3956 / LMG 18251) (Lactobacillus fermentum).